A 343-amino-acid chain; its full sequence is S-adenosylmethionine:tRNA ribosyltransferase-isomerase (343 aa).

This sequence belongs to the QueA family. In terms of assembly, monomer.

It is found in the cytoplasm. It carries out the reaction 7-aminomethyl-7-carbaguanosine(34) in tRNA + S-adenosyl-L-methionine = epoxyqueuosine(34) in tRNA + adenine + L-methionine + 2 H(+). It participates in tRNA modification; tRNA-queuosine biosynthesis. Transfers and isomerizes the ribose moiety from AdoMet to the 7-aminomethyl group of 7-deazaguanine (preQ1-tRNA) to give epoxyqueuosine (oQ-tRNA). This Natranaerobius thermophilus (strain ATCC BAA-1301 / DSM 18059 / JW/NM-WN-LF) protein is S-adenosylmethionine:tRNA ribosyltransferase-isomerase.